Here is a 351-residue protein sequence, read N- to C-terminus: Histidinol-phosphate aminotransferase (351 aa).

At Lys214 the chain carries N6-(pyridoxal phosphate)lysine.

Belongs to the class-II pyridoxal-phosphate-dependent aminotransferase family. Histidinol-phosphate aminotransferase subfamily. It depends on pyridoxal 5'-phosphate as a cofactor.

The enzyme catalyses L-histidinol phosphate + 2-oxoglutarate = 3-(imidazol-4-yl)-2-oxopropyl phosphate + L-glutamate. The protein operates within amino-acid biosynthesis; L-histidine biosynthesis; L-histidine from 5-phospho-alpha-D-ribose 1-diphosphate: step 7/9. In Methanosphaerula palustris (strain ATCC BAA-1556 / DSM 19958 / E1-9c), this protein is Histidinol-phosphate aminotransferase.